Consider the following 479-residue polypeptide: Ribosomal RNA small subunit methyltransferase F (479 aa).

S-adenosyl-L-methionine contacts are provided by residues 125 to 131 (AAAPGSK), E149, D176, and D194. Residue C247 is the Nucleophile of the active site.

This sequence belongs to the class I-like SAM-binding methyltransferase superfamily. RsmB/NOP family.

It localises to the cytoplasm. The catalysed reaction is cytidine(1407) in 16S rRNA + S-adenosyl-L-methionine = 5-methylcytidine(1407) in 16S rRNA + S-adenosyl-L-homocysteine + H(+). Functionally, specifically methylates the cytosine at position 1407 (m5C1407) of 16S rRNA. The sequence is that of Ribosomal RNA small subunit methyltransferase F from Salmonella paratyphi A (strain ATCC 9150 / SARB42).